The chain runs to 246 residues: DNA repair protein RecO (246 aa).

Belongs to the RecO family.

Involved in DNA repair and RecF pathway recombination. This Bifidobacterium adolescentis (strain ATCC 15703 / DSM 20083 / NCTC 11814 / E194a) protein is DNA repair protein RecO.